Consider the following 544-residue polypeptide: Carboxypeptidase Y homolog A (544 aa).

Residues 1 to 17 (MKSLALALLVGGAIASG) form the signal peptide. A propeptide spanning residues 18–124 (PQQQVLREPV…RLDTYDLRVK (107 aa)) is cleaved from the precursor. Disulfide bonds link C178-C417, C312-C326, C336-C359, C343-C352, and C381-C387. Residue N209 is glycosylated (N-linked (GlcNAc...) asparagine). S265 is a catalytic residue. D456 is a catalytic residue. N-linked (GlcNAc...) asparagine glycosylation is present at N506. H517 is an active-site residue.

This sequence belongs to the peptidase S10 family.

It is found in the vacuole. It catalyses the reaction Release of a C-terminal amino acid with broad specificity.. Its function is as follows. Vacuolar carboxypeptidase involved in degradation of small peptides. Digests preferentially peptides containing an aliphatic or hydrophobic residue in P1' position, as well as methionine, leucine or phenylalanine in P1 position of ester substrate. This chain is Carboxypeptidase Y homolog A (CPYA), found in Ajellomyces capsulatus (strain G186AR / H82 / ATCC MYA-2454 / RMSCC 2432) (Darling's disease fungus).